A 225-amino-acid polypeptide reads, in one-letter code: DNA-binding response regulator MtrA (225 aa).

The Response regulatory domain occupies 4 to 117 (RILVVDDDAS…ELVARVRARL (114 aa)). Asp53 is modified (4-aspartylphosphate). The ompR/PhoB-type DNA-binding region spans 125-224 (AEMLSIADVD…VRGVGYKAGP (100 aa)).

In terms of processing, phosphorylated by MtrB.

Member of the two-component regulatory system MtrA/MtrB. The polypeptide is DNA-binding response regulator MtrA (mtrA) (Mycobacterium leprae (strain TN)).